The primary structure comprises 296 residues: Nucleotide-binding protein MGAS2096_Spy0550 (296 aa).

13–20 (GMSGAGKT) is a binding site for ATP. A GTP-binding site is contributed by 63 to 66 (DMRS).

Belongs to the RapZ-like family.

In terms of biological role, displays ATPase and GTPase activities. The protein is Nucleotide-binding protein MGAS2096_Spy0550 of Streptococcus pyogenes serotype M12 (strain MGAS2096).